Here is a 583-residue protein sequence, read N- to C-terminus: MCGILAVLGCSDPSRAKRVRVLELSRRLKHRGPEWSGLHQHGDCYLAQQRLAIVDPASGDQPLFNEDNPSIVTVNGEIYNHEDLRKQLSNHTFRTGSDCDVIAHLYEEYGEDFVDMLDGIFSFVPLDTRDNSYIVARDAIGVTSLYIGWGLDGSVWISSEMKGLNDDCEHFECFPPGHLYSSKDSGFRRWYNPSWYSEAIPSAPYDPLALRHAFEKAVVKRLMTDVPFGVLLSGGLDSSLVASITSRYLATTKAAEQWGSKLHSFCVGLEGSPDLKAGKEVADYLGTVHHEFTFTVQDGIDAIEDVIYHVETYDVTSIRASTPMFLMSRKIKSLGVKWVISGEGSDEIFGGYLYFHKAPNKEEFHEETCRKIKALHQYDCQRANKSTYAWGLEARVPFLDKAFINVAMNIDPENKMIKRDEGRIEKYILRKAFDDEENPYLPKHILYRQKEQFSDGVGYSWIDGLKAHAAKHVTDKMMLNAGNIFPHNTPNTKEAYYYRMIFERFFPQNSARLTVPGGPTVACSTAKAVEWDAAWSNNLDPSGRAALGVHDSAYENHNKVNKTVEFEKIIPLEAAPVELAIQG.

Cys-2 (for GATase activity) is an active-site residue. Residues 2 to 185 (CGILAVLGCS…PGHLYSSKDS (184 aa)) enclose the Glutamine amidotransferase type-2 domain. L-glutamine contacts are provided by residues 50–54 (RLAIV), 75–77 (NGE), and Asp-98. ATP contacts are provided by residues Leu-231, Val-267, and 341-342 (SG). One can recognise an Asparagine synthetase domain in the interval 237–516 (DSSLVASITS…PQNSARLTVP (280 aa)).

Roots.

It catalyses the reaction L-aspartate + L-glutamine + ATP + H2O = L-asparagine + L-glutamate + AMP + diphosphate + H(+). Its pathway is amino-acid biosynthesis; L-asparagine biosynthesis; L-asparagine from L-aspartate (L-Gln route): step 1/1. The sequence is that of Asparagine synthetase, root [glutamine-hydrolyzing] (AS2) from Pisum sativum (Garden pea).